The sequence spans 37 residues: Large ribosomal subunit protein bL36 (37 aa).

Belongs to the bacterial ribosomal protein bL36 family.

The protein is Large ribosomal subunit protein bL36 of Nitratidesulfovibrio vulgaris (strain ATCC 29579 / DSM 644 / CCUG 34227 / NCIMB 8303 / VKM B-1760 / Hildenborough) (Desulfovibrio vulgaris).